Consider the following 85-residue polypeptide: U4-theraphotoxin-Hhn1z (85 aa).

The signal sequence occupies residues 1–22 (MKMTLIAILTCAAVLVLHTTAA). The propeptide occupies 23-48 (EELEAESQLMEVGMPDTELEAVDEER). 3 disulfides stabilise this stretch: Cys-52–Cys-66, Cys-56–Cys-77, and Cys-71–Cys-82.

This sequence belongs to the neurotoxin 12 (Hwtx-2) family. 02 (Hwtx-2) subfamily. As to expression, expressed by the venom gland.

The protein resides in the secreted. Postsynaptic neurotoxin. This is U4-theraphotoxin-Hhn1z from Cyriopagopus hainanus (Chinese bird spider).